The primary structure comprises 1309 residues: Target of rapamycin complex 2 subunit ste20 (1309 aa).

The 87-residue stretch at 24–110 (DFIKKMNTTD…IESFQGENGE (87 aa)) folds into the REM-1 domain. Residues 105–128 (QGENGEAKTGSTSLTRSASATVSR) are disordered. The segment covering 113–128 (TGSTSLTRSASATVSR) has biased composition (polar residues). At S151 the chain carries Phosphoserine. Positions 183–205 (NVNEKNNSSSEDTQPNGKRPSSL) are disordered. The span at 194 to 205 (DTQPNGKRPSSL) shows a compositional bias: polar residues. Transmembrane regions (helical) follow at residues 285–305 (LFLD…WILS), 392–412 (LIDG…LVYL), 504–524 (VIDL…ESFL), 564–584 (TAVL…VCMI), 926–946 (LNHW…LEVC), and 984–1004 (LLLR…INFI). T1203 carries the phosphothreonine modification.

The protein belongs to the RICTOR family. The target of rapamycin complex 2 (TORC2) is composed of at least bit61, pop3/wat1, sin1, ste20 and tor1. Post-translationally, either Ser-203 or Ser-204 are phosphorylated as well.

The protein resides in the membrane. Component of TORC2, which regulates multiple cellular processes to control cell growth in response to environmental signals. TORC2 is required for cell survival under various stress conditions. TORC2 positively controls G1 cell-cycle arrest, sexual development and amino acid uptake. Positively regulates amino acid uptake through the control of expression of amino acid permeases. The polypeptide is Target of rapamycin complex 2 subunit ste20 (Schizosaccharomyces pombe (strain 972 / ATCC 24843) (Fission yeast)).